The primary structure comprises 364 residues: Homeobox protein KNOX3 (364 aa).

The interval 13-49 (TAHGQHHSQLPWGSSPLSAVISPPPQQQQQHQQQSAG) is disordered. Over residues 19-29 (HSQLPWGSSPL) the composition is skewed to polar residues. Residues 246–266 (ELKHHLLKKYSGYLSSLKQEL) form the ELK domain. Residues 267 to 330 (SKKKKKGKLP…NQRKRHWKPT (64 aa)) constitute a DNA-binding region (homeobox; TALE-type).

Belongs to the TALE/KNOX homeobox family. In terms of assembly, binds DNA as a monomer. As to expression, the unit of inflorescence is the spikelet, which bears a fertile tract, the lemma, and the floret consisting of palea, two lodicules, three stamens and the pistil. The lemma is completed by the awn, an appendage homologous to the laminae of normal leaves. Expressed in the inflorescences and lemmas and at lower levels, in palea and vascular bundles.

It localises to the nucleus. May play a role in meristem formation and/or maintenance. Overexpression causes the hooded phenotype characterized by the appearance of an extra flower of inverse polarity on the lemma. Binds to the DNA sequence 5'-TGAC-3'. This Hordeum vulgare (Barley) protein is Homeobox protein KNOX3 (KNOX3).